Reading from the N-terminus, the 485-residue chain is Calcium-dependent protein kinase 27 (485 aa).

The N-myristoyl glycine moiety is linked to residue G2. The Protein kinase domain occupies 28–290 (YILGEELGRG…AAEVLGHPWM (263 aa)). ATP contacts are provided by residues 34–42 (LGRGNFGLT) and K57. Residue D156 is the Proton acceptor of the active site. Position 196 is a phosphoserine (S196). Residues 295–325 (ASDKPIDGVVLSRLKRFRDANKFKKVVLKFI) form an autoinhibitory domain region. 4 EF-hand domains span residues 332–367 (EEIK…LGSN), 368–403 (LSKT…RYKL), 404–439 (DRDE…DGAG), and 444–474 (IKQI…ESSL). Ca(2+) is bound by residues D345, D347, S349, N351, E356, D381, D383, N385, T387, E392, D417, D419, D421, H423, E428, D452, D454, D456, K458, and E463.

This sequence belongs to the protein kinase superfamily. Ser/Thr protein kinase family. CDPK subfamily.

Its subcellular location is the membrane. The enzyme catalyses L-seryl-[protein] + ATP = O-phospho-L-seryl-[protein] + ADP + H(+). It catalyses the reaction L-threonyl-[protein] + ATP = O-phospho-L-threonyl-[protein] + ADP + H(+). Its activity is regulated as follows. Activated by calcium. Autophosphorylation may play an important role in the regulation of the kinase activity. May play a role in signal transduction pathways that involve calcium as a second messenger. This Arabidopsis thaliana (Mouse-ear cress) protein is Calcium-dependent protein kinase 27 (CPK27).